The sequence spans 296 residues: Transcription factor Pur-alpha 1 (296 aa).

Met-1 carries the post-translational modification N-acetylmethionine. 2 disordered regions span residues 1–25 (MEANSGGGGGAEGGRAVTGGGGGGG) and 186–214 (IPGHGSQQPSSSEHNVDRTIDSPGQEETG). Ser-207 carries the phosphoserine modification.

This sequence belongs to the PUR DNA-binding protein family. Homodimer. Interacts with TCP20.

It localises to the nucleus. Functionally, transcription factor that specifically binds the purine-rich double-stranded telomeric repeated sequence 5'-AAACCCTAA-3' found in promoter telo boxes. The sequence is that of Transcription factor Pur-alpha 1 (PURA1) from Arabidopsis thaliana (Mouse-ear cress).